The chain runs to 270 residues: Glucosamine-6-phosphate deaminase (270 aa).

The active-site Proton acceptor; for enolization step is D72. Residue D141 is the For ring-opening step of the active site. H143 serves as the catalytic Proton acceptor; for ring-opening step. The active-site For ring-opening step is E148.

This sequence belongs to the glucosamine/galactosamine-6-phosphate isomerase family. NagB subfamily. As to quaternary structure, homohexamer.

The catalysed reaction is alpha-D-glucosamine 6-phosphate + H2O = beta-D-fructose 6-phosphate + NH4(+). The protein operates within amino-sugar metabolism; N-acetylneuraminate degradation; D-fructose 6-phosphate from N-acetylneuraminate: step 5/5. Its activity is regulated as follows. Allosterically activated by N-acetylglucosamine 6-phosphate (GlcNAc6P). Its function is as follows. Catalyzes the reversible isomerization-deamination of glucosamine 6-phosphate (GlcN6P) to form fructose 6-phosphate (Fru6P) and ammonium ion. In Haemophilus influenzae (strain 86-028NP), this protein is Glucosamine-6-phosphate deaminase.